We begin with the raw amino-acid sequence, 186 residues long: Pyridoxal 5'-phosphate synthase subunit PdxT (186 aa).

Residue 46-48 coordinates L-glutamine; that stretch reads GES. The active-site Nucleophile is cysteine 78. Residues arginine 105 and 134–135 each bind L-glutamine; that span reads IR. Catalysis depends on charge relay system residues histidine 170 and glutamate 172.

It belongs to the glutaminase PdxT/SNO family. In terms of assembly, in the presence of PdxS, forms a dodecamer of heterodimers. Only shows activity in the heterodimer.

It carries out the reaction aldehydo-D-ribose 5-phosphate + D-glyceraldehyde 3-phosphate + L-glutamine = pyridoxal 5'-phosphate + L-glutamate + phosphate + 3 H2O + H(+). The catalysed reaction is L-glutamine + H2O = L-glutamate + NH4(+). It functions in the pathway cofactor biosynthesis; pyridoxal 5'-phosphate biosynthesis. Functionally, catalyzes the hydrolysis of glutamine to glutamate and ammonia as part of the biosynthesis of pyridoxal 5'-phosphate. The resulting ammonia molecule is channeled to the active site of PdxS. This chain is Pyridoxal 5'-phosphate synthase subunit PdxT, found in Clostridium acetobutylicum (strain ATCC 824 / DSM 792 / JCM 1419 / IAM 19013 / LMG 5710 / NBRC 13948 / NRRL B-527 / VKM B-1787 / 2291 / W).